A 358-amino-acid chain; its full sequence is Homoserine O-acetyltransferase (358 aa).

Residues 52 to 337 (NVILICHALT…DEPYGHDAFL (286 aa)) enclose the AB hydrolase-1 domain. The Nucleophile role is filled by Ser148. Arg217 provides a ligand contact to substrate. Catalysis depends on residues Asp304 and His333. Asp334 provides a ligand contact to substrate.

The protein belongs to the AB hydrolase superfamily. MetX family. As to quaternary structure, homodimer.

It localises to the cytoplasm. It catalyses the reaction L-homoserine + acetyl-CoA = O-acetyl-L-homoserine + CoA. It functions in the pathway amino-acid biosynthesis; L-methionine biosynthesis via de novo pathway; O-acetyl-L-homoserine from L-homoserine: step 1/1. Its function is as follows. Transfers an acetyl group from acetyl-CoA to L-homoserine, forming acetyl-L-homoserine. The sequence is that of Homoserine O-acetyltransferase from Chlorobium luteolum (strain DSM 273 / BCRC 81028 / 2530) (Pelodictyon luteolum).